The primary structure comprises 303 residues: Ribosomal protein L11 methyltransferase (303 aa).

Residues threonine 152, glycine 173, aspartate 195, and asparagine 239 each contribute to the S-adenosyl-L-methionine site.

This sequence belongs to the methyltransferase superfamily. PrmA family.

It is found in the cytoplasm. It carries out the reaction L-lysyl-[protein] + 3 S-adenosyl-L-methionine = N(6),N(6),N(6)-trimethyl-L-lysyl-[protein] + 3 S-adenosyl-L-homocysteine + 3 H(+). Methylates ribosomal protein L11. The chain is Ribosomal protein L11 methyltransferase from Desulforapulum autotrophicum (strain ATCC 43914 / DSM 3382 / VKM B-1955 / HRM2) (Desulfobacterium autotrophicum).